Reading from the N-terminus, the 51-residue chain is Glutamine synthetase (51 aa).

The protein belongs to the glutamine synthetase family. In terms of assembly, homooctamer.

It localises to the cytoplasm. The catalysed reaction is L-glutamate + NH4(+) + ATP = L-glutamine + ADP + phosphate + H(+). This Vitis sp. (Grape) protein is Glutamine synthetase.